The chain runs to 391 residues: NAD(P)H-quinone oxidoreductase subunit H, chloroplastic (391 aa).

Belongs to the complex I 49 kDa subunit family. In terms of assembly, NDH is composed of at least 16 different subunits, 5 of which are encoded in the nucleus.

It is found in the plastid. The protein resides in the chloroplast thylakoid membrane. The enzyme catalyses a plastoquinone + NADH + (n+1) H(+)(in) = a plastoquinol + NAD(+) + n H(+)(out). The catalysed reaction is a plastoquinone + NADPH + (n+1) H(+)(in) = a plastoquinol + NADP(+) + n H(+)(out). Its function is as follows. NDH shuttles electrons from NAD(P)H:plastoquinone, via FMN and iron-sulfur (Fe-S) centers, to quinones in the photosynthetic chain and possibly in a chloroplast respiratory chain. The immediate electron acceptor for the enzyme in this species is believed to be plastoquinone. Couples the redox reaction to proton translocation, and thus conserves the redox energy in a proton gradient. The protein is NAD(P)H-quinone oxidoreductase subunit H, chloroplastic of Chaetosphaeridium globosum (Charophycean green alga).